The primary structure comprises 376 residues: Cytochrome c oxidase subunit 2, mitochondrial (376 aa).

A helical transmembrane segment spans residues 164–184 (IFFFLVQILVFVLWVLSRALW). Topologically, residues 185 to 204 (CFRSKISPIPQRIVHGTTIE) are mitochondrial matrix. Residues 205–225 (ILWTILPSIILMFIAIPSFTL) traverse the membrane as a helical segment. Topologically, residues 226-376 (LYSMDDVVVD…YGSWVSNQIQ (151 aa)) are mitochondrial intermembrane. Cu cation-binding residues include histidine 309, cysteine 344, glutamate 346, cysteine 348, histidine 352, and methionine 355. Glutamate 346 is a binding site for Mg(2+).

It belongs to the cytochrome c oxidase subunit 2 family. In terms of assembly, component of the cytochrome c oxidase (complex IV, CIV), a multisubunit enzyme composed of a catalytic core of 3 subunits and several supernumerary subunits. The complex exists as a monomer or a dimer and forms supercomplexes (SCs) in the inner mitochondrial membrane with ubiquinol-cytochrome c oxidoreductase (cytochrome b-c1 complex, complex III, CIII). Cu cation serves as cofactor.

The protein resides in the mitochondrion inner membrane. The enzyme catalyses 4 Fe(II)-[cytochrome c] + O2 + 8 H(+)(in) = 4 Fe(III)-[cytochrome c] + 2 H2O + 4 H(+)(out). Its function is as follows. Component of the cytochrome c oxidase, the last enzyme in the mitochondrial electron transport chain which drives oxidative phosphorylation. The respiratory chain contains 3 multisubunit complexes succinate dehydrogenase (complex II, CII), ubiquinol-cytochrome c oxidoreductase (cytochrome b-c1 complex, complex III, CIII) and cytochrome c oxidase (complex IV, CIV), that cooperate to transfer electrons derived from NADH and succinate to molecular oxygen, creating an electrochemical gradient over the inner membrane that drives transmembrane transport and the ATP synthase. Cytochrome c oxidase is the component of the respiratory chain that catalyzes the reduction of oxygen to water. Electrons originating from reduced cytochrome c in the intermembrane space (IMS) are transferred via the dinuclear copper A center (CU(A)) of subunit 2 and heme A of subunit 1 to the active site in subunit 1, a binuclear center (BNC) formed by heme A3 and copper B (CU(B)). The BNC reduces molecular oxygen to 2 water molecules using 4 electrons from cytochrome c in the IMS and 4 protons from the mitochondrial matrix. This chain is Cytochrome c oxidase subunit 2, mitochondrial (COX2), found in Vigna unguiculata (Cowpea).